The sequence spans 398 residues: Thyrotropin-releasing hormone receptor (398 aa).

Topologically, residues 1–28 are extracellular; it reads MENETVSELNQTQLQPRAVVALEYQVVT. 2 N-linked (GlcNAc...) asparagine glycosylation sites follow: N3 and N10. A helical transmembrane segment spans residues 29-51; sequence ILLVLIICGLGIVGNIMVVLVVM. At 52-61 the chain is on the cytoplasmic side; the sequence is RTKHMRTPTN. Residues 62-83 form a helical membrane-spanning segment; the sequence is CYLVSLAVADLMVLVAAGLPNI. Over 84–99 the chain is Extracellular; sequence TDSIYGSWVYGYVGCL. Residues C98 and C179 are joined by a disulfide bond. The helical transmembrane segment at 100–121 threads the bilayer; the sequence is CITYLQYLGINASSCSITAFTI. The Cytoplasmic portion of the chain corresponds to 122–144; that stretch reads ERYIAICHPIKAQFLCTFSRAKK. A helical membrane pass occupies residues 145–168; the sequence is IIIFVWAFTSLYCMLWFFLLDLNI. Residues 169–193 are Extracellular-facing; that stretch reads STYKDAIVISCGYKISRNYYSPIYL. The helical transmembrane segment at 194–215 threads the bilayer; that stretch reads MDFGVFYVVPMILATVLYGFIA. At 216–266 the chain is on the cytoplasmic side; it reads RILFLNPIPSDPKENSKTWKNDSTHQNTNLNVNTSNRCFNSTVSSRKQVTK. A helical transmembrane segment spans residues 267–288; it reads MLAVVVILFALLWMPYRTLVVV. Residues 289–296 are Extracellular-facing; that stretch reads NSFLSSPF. Residues 297 to 319 form a helical membrane-spanning segment; that stretch reads QENWFLLFCRICIYLNSAINPVI. Residues 320–398 lie on the Cytoplasmic side of the membrane; sequence YNLMSQKFRA…LASEVSFSQS (79 aa).

The protein belongs to the G-protein coupled receptor 1 family.

It is found in the cell membrane. Receptor for thyrotropin-releasing hormone (TRH). Upon ligand binding, this G-protein-coupled receptor triggers activation of the phosphatidylinositol (IP3)-calcium-protein kinase C (PKC) pathway. The protein is Thyrotropin-releasing hormone receptor (TRHR) of Homo sapiens (Human).